We begin with the raw amino-acid sequence, 679 residues long: Pollen receptor-like kinase 4 (679 aa).

An N-terminal signal peptide occupies residues 1–39 (MLTWETPVMLASNTASTKKLAFITTFLIIVLCPVTMVMS). LRR repeat units lie at residues 118 to 141 (IKNL…VKNF), 142 to 165 (GALK…AFDG), 167 to 191 (HHLK…AYLP), 193 to 217 (LLEL…DLKL), and 234 to 257 (SNMD…PCSS). The segment covering 252–269 (LSPCSSDSGSSPDLPSSP) has biased composition (low complexity). Positions 252-271 (LSPCSSDSGSSPDLPSSPTE) are disordered. The helical transmembrane segment at 278-298 (FFIIAIVLIVIGIILMIISLV) threads the bilayer. Positions 311 to 344 (SAYPSAGQDRTEKYNYDQSTDKDKAADSVTSYTS) are disordered. The span at 319–336 (DRTEKYNYDQSTDKDKAA) shows a compositional bias: basic and acidic residues. One can recognise a Protein kinase domain in the interval 372–646 (RASAEVLGSG…RDAVEKIERL (275 aa)). At S374 the chain carries Phosphoserine. ATP contacts are provided by residues 378–386 (LGSGSFGSS) and K400. 2 positions are modified to phosphoserine: S452 and S455. At T472 the chain carries Phosphothreonine. A Phosphotyrosine modification is found at Y542.

The protein belongs to the protein kinase superfamily. Ser/Thr protein kinase family. As to quaternary structure, interacts in vitro with ROPGEF1 (via PRONE domain). Interacts weakly with the GRI peptide. In terms of tissue distribution, expressed in pollen and/or in flowers, but not in leaves.

It is found in the membrane. It carries out the reaction L-seryl-[protein] + ATP = O-phospho-L-seryl-[protein] + ADP + H(+). The enzyme catalyses L-threonyl-[protein] + ATP = O-phospho-L-threonyl-[protein] + ADP + H(+). Its function is as follows. Receptor-like kinase involved in the control of pollen germination and pollen tube polar growth. Can phosphorylate ROPGEF1 in vitro. This chain is Pollen receptor-like kinase 4, found in Arabidopsis thaliana (Mouse-ear cress).